The following is a 266-amino-acid chain: Glutamate racemase (266 aa).

Substrate is bound by residues 9–10 (DS) and 41–42 (YG). The active-site Proton donor/acceptor is Cys72. 73–74 (NT) is a binding site for substrate. Cys184 (proton donor/acceptor) is an active-site residue. Residue 185-186 (TH) participates in substrate binding.

It belongs to the aspartate/glutamate racemases family.

The enzyme catalyses L-glutamate = D-glutamate. The protein operates within cell wall biogenesis; peptidoglycan biosynthesis. Functionally, provides the (R)-glutamate required for cell wall biosynthesis. This chain is Glutamate racemase, found in Staphylococcus aureus (strain bovine RF122 / ET3-1).